We begin with the raw amino-acid sequence, 536 residues long: Membrane protein insertase YidC (536 aa).

The next 4 helical transmembrane spans lie at 5-25, 353-373, 418-438, and 495-515; these read LIIA…IFPT, GNYG…FFPL, VNPL…FGLY, and MLML…GLVI.

Belongs to the OXA1/ALB3/YidC family. Type 1 subfamily. In terms of assembly, interacts with the Sec translocase complex via SecD. Specifically interacts with transmembrane segments of nascent integral membrane proteins during membrane integration.

The protein localises to the cell inner membrane. Its function is as follows. Required for the insertion and/or proper folding and/or complex formation of integral membrane proteins into the membrane. Involved in integration of membrane proteins that insert both dependently and independently of the Sec translocase complex, as well as at least some lipoproteins. Aids folding of multispanning membrane proteins. This is Membrane protein insertase YidC from Geobacter sp. (strain M21).